The chain runs to 232 residues: Orotidine 5'-phosphate decarboxylase (232 aa).

Residues Asp10, Lys32, 59–68, Thr119, Arg180, Gln189, Gly209, and Arg210 contribute to the substrate site; that span reads DLKFHDIPNT. Lys61 functions as the Proton donor in the catalytic mechanism.

This sequence belongs to the OMP decarboxylase family. Type 1 subfamily. As to quaternary structure, homodimer.

It carries out the reaction orotidine 5'-phosphate + H(+) = UMP + CO2. It functions in the pathway pyrimidine metabolism; UMP biosynthesis via de novo pathway; UMP from orotate: step 2/2. Functionally, catalyzes the decarboxylation of orotidine 5'-monophosphate (OMP) to uridine 5'-monophosphate (UMP). This chain is Orotidine 5'-phosphate decarboxylase, found in Actinobacillus succinogenes (strain ATCC 55618 / DSM 22257 / CCUG 43843 / 130Z).